Reading from the N-terminus, the 385-residue chain is MSSVNANGGYTKPQKYVPGPGDPELPPQLSEFKDKTSDEILKEMNRMPFFMTKLDETDGAGGENVELEALKALAYEGEPHEIAENFKKQGNELYKAKRFKDARELYSKGLAVECEDKSINESLYANRAACELELKNYRRCIEDCSKALTINPKNVKCYYRTSKAFFQLNKLEEAKSAATFANQRIDPENKSILNMLSVIDRKEQELKAKEEKQQREAQERENKKIMLESAMTLRNITNIKTHSPVELLNEGKIRLEDPMDFESQLIYPALIMYPTQDEFDFVGEVSELTTVQELVDLVLEGPQERFKKEGKENFTPKKVLVFMETKAGGLIKAGKKLTFHDILKKESPDVPLFDNALKIYIVPKVESEGWISKWDKQKALERRSV.

Positions 1-37 (MSSVNANGGYTKPQKYVPGPGDPELPPQLSEFKDKTS) are disordered. TPR repeat units lie at residues 83–116 (AENF…ECED), 121–154 (ESLY…NPKN), and 155–189 (VKCY…DPEN).

The protein belongs to the TTC4 family. Monomer. Component of Hsp70 and Hsp90 chaperone complexes. Interacts (via TPR repeats) with HSC82 and HSP82 (via C-terminal MEEVD pentapeptide). Interacts with CPR7, SSA1 and SPI1.

Its subcellular location is the cytoplasm. Its function is as follows. Co-chaperone that binds to the molecular chaperones Hsp90 (HSC82 and HSP82) and Hsp70 (SSA1). Stimulates SSA1 ATPase activity, but not Hsp90 ATPase activity. Involved in only a subset of Hsp90 functions. This is Hsp70/Hsp90 co-chaperone CNS1 (CNS1) from Saccharomyces cerevisiae (strain ATCC 204508 / S288c) (Baker's yeast).